The primary structure comprises 972 residues: Protein NRDE2 homolog (972 aa).

A compositionally biased stretch (polar residues) spans 1-17 (MPSNHNTSVPKFSSFNS). Residues 1-61 (MPSNHNTSVP…RSIQSNFAVD (61 aa)) are disordered. Basic residues predominate over residues 19 to 33 (KAKKNPITKSNKKYR). The span at 37-59 (DQVSSNHAKSSFPSHRSIQSNFA) shows a compositional bias: polar residues. HAT repeat units follow at residues 159 to 191 (LNILKAIKETDEEIKKNPGKARLWIKMCEYQER), 250 to 282 (WSKEETNQKFEEVLIEHPGYLNLWMKYAEYFTG), 318 to 350 (TDVTSNFEVEEAILHLLIRLCDFLKNCGYYELA), 355 to 386 (QANMELCYFYPRYLEKKLDSTFFESFSKFWNS), 608 to 640 (EEKPQVNKIVKKILKKYDSSVSVWNTYAQLEHL), 788 to 820 (YNLPKVRPFFEKGVTLFSANTAIWEVYIFFESK), and 860 to 894 (TNSQYFLRTLDITLNNEKLKSVAKFWRIYLKILNL). Phosphoserine is present on Ser970.

The protein belongs to the NRDE2 family.

Its subcellular location is the nucleus. In Schizosaccharomyces pombe (strain 972 / ATCC 24843) (Fission yeast), this protein is Protein NRDE2 homolog.